The chain runs to 274 residues: Large ribosomal subunit protein uL2cz/uL2cy (274 aa).

Residues 225–274 (NPVDHPHGGGEGRAPIGRKKPTTPWGYPALGRRSRKRKKYSDSFILRRRK) form a disordered region.

It belongs to the universal ribosomal protein uL2 family. As to quaternary structure, part of the 50S ribosomal subunit.

The protein resides in the plastid. The protein localises to the chloroplast. The sequence is that of Large ribosomal subunit protein uL2cz/uL2cy (rpl2-A) from Dioscorea elephantipes (Elephant's foot yam).